Reading from the N-terminus, the 191-residue chain is Putative leucine efflux protein (191 aa).

A run of 5 helical transmembrane segments spans residues 28–48 (GVFI…ATLI), 50–70 (TTPI…LYLE), 101–121 (ILSL…VQFI), 132–152 (FFIL…FLII), and 167–187 (LAKV…ARLA).

The protein belongs to the Rht family.

The protein localises to the cell inner membrane. The enzyme catalyses L-leucine(in) + H(+)(out) = L-leucine(out) + H(+)(in). In terms of biological role, exporter of leucine. In Shigella boydii serotype 4 (strain Sb227), this protein is Putative leucine efflux protein (leuE).